Reading from the N-terminus, the 105-residue chain is DNA-directed RNA polymerase subunit omega (105 aa).

The protein belongs to the RNA polymerase subunit omega family. The RNAP catalytic core consists of 2 alpha, 1 beta, 1 beta' and 1 omega subunit. When a sigma factor is associated with the core the holoenzyme is formed, which can initiate transcription.

It carries out the reaction RNA(n) + a ribonucleoside 5'-triphosphate = RNA(n+1) + diphosphate. In terms of biological role, promotes RNA polymerase assembly. Latches the N- and C-terminal regions of the beta' subunit thereby facilitating its interaction with the beta and alpha subunits. The chain is DNA-directed RNA polymerase subunit omega from Streptococcus mutans serotype c (strain ATCC 700610 / UA159).